A 514-amino-acid polypeptide reads, in one-letter code: Ras-GEF domain-containing family member 1B-A (514 aa).

Residues 76-206 (HDNNLISGSL…MTQTLIRKLT (131 aa)) form the N-terminal Ras-GEF domain. In terms of domain architecture, Ras-GEF spans 246–494 (DPFTLAQQLT…YLASYESEGP (249 aa)).

In terms of tissue distribution, detected in oocytes, and in embryos at 4 to 120 hours post-fertilization (hpf). Detected along marginal blastomeres at early epiboly stage and throughout the margin at the onset of gastrulation. At 60% epiboly, strongest expression is found in the dorsal shield region and is restricted to the epiblast. Detected in the anterior border of the presomitic mesoderm at the end of epiboly. Detected in adaxial cells, in the somites and in the nervous system during somitogenesis. Detected in diencephalon and hindbrain and in cells surrounding the notochord, including adaxial cells and ventral mesendoderm, in 15-somite stage embryos. At 48 hpf, detected mainly in the brain.

In terms of biological role, guanine nucleotide exchange factor (GEF) for Ras family proteins (in vitro). The sequence is that of Ras-GEF domain-containing family member 1B-A (rasgef1ba) from Danio rerio (Zebrafish).